We begin with the raw amino-acid sequence, 736 residues long: Na(+)/H(+) antiporter NhaA (736 aa).

A na(+)/H(+) antiporter NhaA region spans residues 1–387 (MNHSPQSARP…ICGYLLLRAA (387 aa)). A run of 11 helical transmembrane segments spans residues 23-43 (AGGI…NSPF), 58-78 (LSLA…LVGL), 96-116 (MLPG…FAVL), 126-146 (GWAV…SLLG), 155-175 (VFLA…IAIF), 178-198 (AEIS…LFVM), 201-221 (MDVV…FFVF), 265-285 (VAFI…FKGL), 298-318 (ILLG…WLAI), 334-354 (LYGV…IGLL), and 367-387 (IGVL…LRAA). The tract at residues 388–736 (RPDQSAANPL…EKAIWARYGL (349 aa)) is peptidase S49.

The protein in the N-terminal section; belongs to the NhaA Na(+)/H(+) (TC 2.A.33) antiporter family. In the C-terminal section; belongs to the peptidase S49 family.

Its subcellular location is the cell inner membrane. It carries out the reaction Na(+)(in) + 2 H(+)(out) = Na(+)(out) + 2 H(+)(in). Na(+)/H(+) antiporter that extrudes sodium in exchange for external protons. This is Na(+)/H(+) antiporter NhaA from Brucella melitensis biotype 1 (strain ATCC 23456 / CCUG 17765 / NCTC 10094 / 16M).